Reading from the N-terminus, the 366-residue chain is Ribosomal RNA large subunit methyltransferase M (366 aa).

S-adenosyl-L-methionine contacts are provided by residues S188, 221-224, D240, D260, and D277; that span reads CPGG. The active-site Proton acceptor is the K306.

This sequence belongs to the class I-like SAM-binding methyltransferase superfamily. RNA methyltransferase RlmE family. RlmM subfamily. Monomer.

The protein localises to the cytoplasm. The catalysed reaction is cytidine(2498) in 23S rRNA + S-adenosyl-L-methionine = 2'-O-methylcytidine(2498) in 23S rRNA + S-adenosyl-L-homocysteine + H(+). Functionally, catalyzes the 2'-O-methylation at nucleotide C2498 in 23S rRNA. The sequence is that of Ribosomal RNA large subunit methyltransferase M from Photorhabdus sp. (strain Az29).